Consider the following 407-residue polypeptide: Arginine biosynthesis bifunctional protein ArgJ (407 aa).

Substrate is bound by residues threonine 157, lysine 183, threonine 194, glutamate 280, asparagine 402, and threonine 407. Catalysis depends on threonine 194, which acts as the Nucleophile.

This sequence belongs to the ArgJ family. As to quaternary structure, heterotetramer of two alpha and two beta chains.

The protein localises to the cytoplasm. It carries out the reaction N(2)-acetyl-L-ornithine + L-glutamate = N-acetyl-L-glutamate + L-ornithine. The catalysed reaction is L-glutamate + acetyl-CoA = N-acetyl-L-glutamate + CoA + H(+). Its pathway is amino-acid biosynthesis; L-arginine biosynthesis; L-ornithine and N-acetyl-L-glutamate from L-glutamate and N(2)-acetyl-L-ornithine (cyclic): step 1/1. The protein operates within amino-acid biosynthesis; L-arginine biosynthesis; N(2)-acetyl-L-ornithine from L-glutamate: step 1/4. In terms of biological role, catalyzes two activities which are involved in the cyclic version of arginine biosynthesis: the synthesis of N-acetylglutamate from glutamate and acetyl-CoA as the acetyl donor, and of ornithine by transacetylation between N(2)-acetylornithine and glutamate. This chain is Arginine biosynthesis bifunctional protein ArgJ, found in Bacillus cereus (strain ATCC 10987 / NRS 248).